A 329-amino-acid chain; its full sequence is MKITVIGAGSWGTALALHFSQHGNRVSLWTRNADQVRQMQEARENKRGLPGFSFPETLEVCADLADALKDSGLVLIVTSVAGLRSSAELLKQYGAGHLPVLAACKGFEQDTGLLTFQVLKEVLPDNKKIGVLSGPSFAQELAKQLPCAVVLASENQEWIEELVPQLNTTVMRLYGSTDVIGVAVGGAVKNVMAIATGLSDGLEYGLNARAALVTRGLAEITRLASAMGAQPKTMMGLAGIGDLILTCTGALSRNRRVGLGLAEGKELHQVLVEIGHVSEGVSTIEEVFNTACKYQIDMPITQTLLQLIRKEMTPQQVVERLMERSARFE.

NADPH-binding residues include Ser-10, Trp-11, Arg-31, and Lys-105. The sn-glycerol 3-phosphate site is built by Lys-105, Gly-134, and Ser-136. Ala-138 provides a ligand contact to NADPH. Residues Lys-189, Asp-242, Ser-252, Arg-253, and Asn-254 each contribute to the sn-glycerol 3-phosphate site. Lys-189 acts as the Proton acceptor in catalysis. Arg-253 contributes to the NADPH binding site. Residues Val-277 and Glu-279 each coordinate NADPH.

Belongs to the NAD-dependent glycerol-3-phosphate dehydrogenase family.

The protein localises to the cytoplasm. It catalyses the reaction sn-glycerol 3-phosphate + NAD(+) = dihydroxyacetone phosphate + NADH + H(+). The enzyme catalyses sn-glycerol 3-phosphate + NADP(+) = dihydroxyacetone phosphate + NADPH + H(+). Its pathway is membrane lipid metabolism; glycerophospholipid metabolism. Catalyzes the reduction of the glycolytic intermediate dihydroxyacetone phosphate (DHAP) to sn-glycerol 3-phosphate (G3P), the key precursor for phospholipid synthesis. This is Glycerol-3-phosphate dehydrogenase [NAD(P)+] from Neisseria meningitidis serogroup C (strain 053442).